Consider the following 371-residue polypeptide: Zinc finger CCCH domain-containing protein 21 (371 aa).

The tract at residues 1-64 is disordered; sequence MPPKQQPKAD…AAKKKKEEEK (64 aa). Over residues 10–23 the composition is skewed to basic and acidic residues; it reads DLAKKQKQVEDKTF. Residues 34-46 are compositionally biased toward polar residues; sequence VQKYVQSLKQSVQ. 2 consecutive C3H1-type zinc fingers follow at residues 88-115 and 159-197; these read DPKSILCEFFKAGQCQKGFKCKFSHDLN and KPTDIVCKYFLDAVEKKQYGWFWSCPNGGKECHYRHALP. Coiled coils occupy residues 205–237 and 283–317; these read QMKALLEEESSKKLAVEDEIENERAKLQTATQM and FVDDAEACEEYEREREQEETEQKAKNKEAEAGTSK. Residues 290 to 371 are disordered; it reads CEEYEREREQ…IREPNDEGSS (82 aa). Over residues 292 to 312 the composition is skewed to basic and acidic residues; the sequence is EYEREREQEETEQKAKNKEAE. The segment covering 330-352 has biased composition (acidic residues); it reads NEEEEDDDDDDDDLDMDELDELE.

The sequence is that of Zinc finger CCCH domain-containing protein 21 from Arabidopsis thaliana (Mouse-ear cress).